We begin with the raw amino-acid sequence, 115 residues long: Translation initiation factor 1A 2 (115 aa).

The segment at 1-34 (MANYRSTIRHRNSGSRKSVSGDTHEVTRVRTPQK) is disordered. Over residues 22–34 (DTHEVTRVRTPQK) the composition is skewed to basic and acidic residues. Residues 27 to 101 (TRVRTPQKDR…SKADVTWKYT (75 aa)) enclose the S1-like domain.

It belongs to the eIF-1A family.

Its function is as follows. Seems to be required for maximal rate of protein biosynthesis. Enhances ribosome dissociation into subunits and stabilizes the binding of the initiator Met-tRNA(I) to 40 S ribosomal subunits. This is Translation initiation factor 1A 2 from Methanosarcina barkeri (strain Fusaro / DSM 804).